A 685-amino-acid polypeptide reads, in one-letter code: Multicopper oxidase VdtB (685 aa).

The signal sequence occupies residues 1 to 17 (MPAYLLLLACNVLLVLG). 2 consecutive Plastocyanin-like domains span residues 26 to 139 (LTWE…IRRK) and 168 to 368 (IMML…RYKN). Asn-71 is a glycosylation site (N-linked (GlcNAc...) asparagine). His-75, His-77, His-119, and His-121 together coordinate Cu cation. N-linked (GlcNAc...) asparagine glycans are attached at residues Asn-178, Asn-229, Asn-253, Asn-432, and Asn-475. The 120-residue stretch at 466–585 (DDDLIIRTQN…DNGMAMAILD (120 aa)) folds into the Plastocyanin-like 3 domain. Residue His-500 coordinates Cu cation. An N-linked (GlcNAc...) asparagine glycan is attached at Asn-517. Residues 627–647 (SLVWAGGAAVVLLSLFIGGLW) traverse the membrane as a helical segment.

It belongs to the multicopper oxidase family.

It localises to the membrane. It carries out the reaction 4 semiviriditoxin + O2 = 2 (M)-viriditoxin + 2 H2O. Its pathway is secondary metabolite biosynthesis. Multicopper oxidase; part of the gene cluster that mediates the biosynthesis of viriditoxin, one of the 'classical' secondary metabolites produced by fungi and that has antibacterial activity. The first step is performed by the polyketide synthase VdtA which condenses one acetyl-CoA and 6 malonyl-CoA units to form the heptaketide monomer backbone of viriditoxin. The product of VdtA is then O-methylated on C7 by the O-methyltransferase VdtC. The O-methyl group is important for the stereoselective coupling of the monomers at the final step of viriditoxin biosynthesis. The short-chain dehydrogenase/reductase VdtF then acts as a stereospecific reductase converting the pyrone to dihydropyrone via the reduction of the C3-C4 double bond. The FAD-binding monooxygenase VdtE then converts the ketone group into a methyl-ester group to yield semi-viriditoxin. Finally, the laccase VdtB is involved in dimerization of 2 semi-viriditoxin molecules to yield the final viriditoxin. VdtB is responsible for the regioselective 6,6'-coupling of semi-viriditoxin, which yields (M)-viriditoxin and (P)-viriditoxin at a ratio of 1:2. The non-catalytic carboxylesterase-like protein VdtD affects the stereochemistical outcome of the coupling. The highly reducing polyketide synthase VdtX is not involved in viriditoxin synthesis, but might possibly play a role in the production of additional metabolites not identified yet. The sequence is that of Multicopper oxidase VdtB from Byssochlamys spectabilis (Paecilomyces variotii).